The primary structure comprises 477 residues: Probable ribonuclease FAU-1 (477 aa).

It belongs to the FAU-1 family.

Probable RNase involved in rRNA stability through maturation and/or degradation of precursor rRNAs. Binds to RNA in loop regions with AU-rich sequences. This is Probable ribonuclease FAU-1 from Staphylothermus marinus (strain ATCC 43588 / DSM 3639 / JCM 9404 / F1).